The sequence spans 132 residues: Small ribosomal subunit protein uS8 (132 aa).

This sequence belongs to the universal ribosomal protein uS8 family. In terms of assembly, part of the 30S ribosomal subunit. Contacts proteins S5 and S12.

Functionally, one of the primary rRNA binding proteins, it binds directly to 16S rRNA central domain where it helps coordinate assembly of the platform of the 30S subunit. The sequence is that of Small ribosomal subunit protein uS8 from Rubrobacter xylanophilus (strain DSM 9941 / JCM 11954 / NBRC 16129 / PRD-1).